The following is a 115-amino-acid chain: NADH-ubiquinone oxidoreductase chain 3 (115 aa).

A run of 3 helical transmembrane segments spans residues 3 to 23 (LMLT…IAFW), 55 to 75 (FFLV…LLPL), and 84 to 104 (LNTM…SLAY).

This sequence belongs to the complex I subunit 3 family. As to quaternary structure, core subunit of respiratory chain NADH dehydrogenase (Complex I) which is composed of 45 different subunits. Interacts with TMEM186. Interacts with TMEM242.

The protein localises to the mitochondrion inner membrane. The catalysed reaction is a ubiquinone + NADH + 5 H(+)(in) = a ubiquinol + NAD(+) + 4 H(+)(out). Core subunit of the mitochondrial membrane respiratory chain NADH dehydrogenase (Complex I) which catalyzes electron transfer from NADH through the respiratory chain, using ubiquinone as an electron acceptor. Essential for the catalytic activity of complex I. The protein is NADH-ubiquinone oxidoreductase chain 3 of Equus caballus (Horse).